The primary structure comprises 352 residues: Uricase (352 aa).

The disordered stretch occupies residues 1 to 32; sequence MFATPLRQPAAANHQTPKNSAGMDEHGKPYQY. Basic and acidic residues predominate over residues 23–32; sequence MDEHGKPYQY. Residues Lys41 and Thr86 each act as charge relay system in the active site. Urate is bound by residues Thr86, Asp87, Phe214, Arg231, Val279, Gln280, and Asn306. His308 functions as the Charge relay system in the catalytic mechanism. The Microbody targeting signal motif lies at 350–352; sequence SHL.

Belongs to the uricase family. As to expression, malpighian tubules.

The protein localises to the peroxisome. The catalysed reaction is urate + O2 + H2O = 5-hydroxyisourate + H2O2. It functions in the pathway purine metabolism; urate degradation; (S)-allantoin from urate: step 1/3. With respect to regulation, repressed by 20-hydroxyecdysone. Functionally, catalyzes the oxidation of uric acid to 5-hydroxyisourate, which is further processed to form (S)-allantoin. The protein is Uricase (Uro) of Drosophila melanogaster (Fruit fly).